Here is a 331-residue protein sequence, read N- to C-terminus: C-type lectin domain family 4 member K (331 aa).

The Cytoplasmic segment spans residues 1–41 (MPEAEMKEEAPEAHFTVDKQNISLWPREPPPKQDLSPVLRK). Residues 42–62 (PLCICVAFTCLALVLVTSIVL) traverse the membrane as a helical; Signal-anchor for type II membrane protein segment. Residues 63-331 (QAVFYPRLMG…CKRPYVQTTE (269 aa)) lie on the Extracellular side of the membrane. Residues Asn90 and Asn116 are each glycosylated (N-linked (GlcNAc...) asparagine). A coiled-coil region spans residues 106–197 (DDAEVQMQIV…LKQQSDILEM (92 aa)). Residues 205–323 (FSGNFYYFSR…CDNTFLFICK (119 aa)) enclose the C-type lectin domain. Intrachain disulfides connect Cys226-Cys322 and Cys298-Cys314.

As to quaternary structure, homotrimer. Expressed by Langerhans cells. Expressed in dendritic cells and by scattered cells in lymph nodes and spleen. Also detected in some non-lymphoid tissues such as lung, liver and heart.

The protein resides in the membrane. Functionally, calcium-dependent lectin displaying mannose-binding specificity. Induces the formation of Birbeck granules (BGs); is a potent regulator of membrane superimposition and zippering. Binds to sulfated as well as mannosylated glycans, keratan sulfate (KS) and beta-glucans. Facilitates uptake of antigens and is involved in the routing and/or processing of antigen for presentation to T cells. This chain is C-type lectin domain family 4 member K (Cd207), found in Mus musculus (Mouse).